We begin with the raw amino-acid sequence, 92 residues long: Small ribosomal subunit protein uS19 (92 aa).

Belongs to the universal ribosomal protein uS19 family.

In terms of biological role, protein S19 forms a complex with S13 that binds strongly to the 16S ribosomal RNA. The sequence is that of Small ribosomal subunit protein uS19 from Baumannia cicadellinicola subsp. Homalodisca coagulata.